The following is a 1052-amino-acid chain: Focal adhesion kinase 1 (1052 aa).

A disordered region spans residues 1-27 (MAAAYLDPNLNHTPNSSTKTHLGTGME). Ala-2 carries the N-acetylalanine modification. Tyr-5 bears the Phosphotyrosine mark. The span at 10–21 (LNHTPNSSTKTH) shows a compositional bias: polar residues. At Thr-13 the chain carries Phosphothreonine. Residues Ser-29 and Ser-54 each carry the phosphoserine modification. In terms of domain architecture, FERM spans 35-355 (RVLKVFHYFE…GYCRLVNGTS (321 aa)). Lys-152 participates in a covalent cross-link: Glycyl lysine isopeptide (Lys-Gly) (interchain with G-Cter in SUMO). Tyr-397 carries the phosphotyrosine; by autocatalysis modification. Tyr-407 bears the Phosphotyrosine mark. A Protein kinase domain is found at 422–680 (IELGRCIGEG…ELKAQLSTIL (259 aa)). Residues 428-434 (IGEGQFG), Lys-454, and 500-502 (ELC) each bind ATP. Residue Asp-546 is the Proton acceptor of the active site. Phosphotyrosine is present on Tyr-570. Tyr-576 and Tyr-577 each carry phosphotyrosine; by RET and SRC. The residue at position 580 (Ser-580) is a Phosphoserine. Basic and acidic residues predominate over residues 684–697 (KAQQEERMRMESRR). Disordered stretches follow at residues 684–734 (KAQQ…PSPQ) and 839–922 (LSRG…RSND). An interaction with TGFB1I1 region spans residues 707–1052 (GSDEAPPKPS…LKMLGQTRPH (346 aa)). Ser-722 carries the phosphoserine modification. Ser-732 is subject to Phosphoserine; by CDK5. The span at 839–849 (LSRGSIDREDG) shows a compositional bias: basic and acidic residues. Residue Ser-843 is modified to Phosphoserine. At Tyr-861 the chain carries Phosphotyrosine. The segment covering 869-880 (PAAPPKKPPRPG) has biased composition (pro residues). Phosphoserine is present on residues Ser-887 and Ser-910. The interaction with ARHGEF28 stretch occupies residues 912–1052 (PPTANLDRSN…LKMLGQTRPH (141 aa)). Thr-914 is subject to Phosphothreonine. Residue Tyr-925 is modified to Phosphotyrosine.

The protein belongs to the protein kinase superfamily. Tyr protein kinase family. FAK subfamily. In terms of assembly, interacts (via first Pro-rich region) with CAS family members (via SH3 domain), including BCAR1, BCAR3, and CASS4. Interacts with NEDD9 (via SH3 domain). Interacts with GIT1. Interacts with SORBS1. Interacts with ARHGEF28. Interacts with SHB. Part of a complex composed of THSD1, PTK2/FAK1, TLN1 and VCL. Interacts with PXN and TLN1. Interacts with STAT1. Interacts with DCC. Interacts with WASL. Interacts with ARHGEF7. Interacts with GRB2 and GRB7. Component of a complex that contains at least FER, CTTN and PTK2/FAK1. Interacts with BMX. Interacts with TGFB1I1. Interacts with STEAP4. Interacts with ZFYVE21. Interacts with ESR1. Interacts with PIK3R1 or PIK3R2. Interacts with SRC, FGR, FLT4 and RET. Interacts with EPHA2 in resting cells; activation of EPHA2 recruits PTPN11, leading to dephosphorylation of PTK2/FAK1 and dissociation of the complex. Interacts with EPHA1 (kinase activity-dependent). Interacts with CD4; this interaction requires the presence of HIV-1 gp120. Interacts with PIAS1. Interacts with ARHGAP26 and SHC1. Interacts with RB1CC1; this inhibits PTK2/FAK1 activity and activation of downstream signaling pathways. Interacts with P53/TP53 and MDM2. Interacts with LPXN (via LD motif 3). Interacts with MISP. Interacts with CIB1 isoform 2. Interacts with CD36. Interacts with EMP2; regulates PTK2 activation and localization. Interacts with DSCAM. Interacts with AMBRA1. Interacts (when tyrosine-phosphorylated) with tensin TNS1; the interaction is increased by phosphorylation of TNS1. Post-translationally, phosphorylated on tyrosine residues upon activation, e.g. upon integrin signaling. Tyr-397 is the major autophosphorylation site, but other kinases can also phosphorylate this residue. Phosphorylation at Tyr-397 promotes interaction with SRC and SRC family members, leading to phosphorylation at Tyr-576, Tyr-577 and at additional tyrosine residues. FGR promotes phosphorylation at Tyr-397 and Tyr-576. FER promotes phosphorylation at Tyr-577, Tyr-861 and Tyr-925, even when cells are not adherent. Tyr-397, Tyr-576 and Ser-722 are phosphorylated only when cells are adherent. Phosphorylation at Tyr-397 is important for interaction with BMX, PIK3R1 and SHC1. Phosphorylation at Tyr-925 is important for interaction with GRB2. Dephosphorylated by PTPN11; PTPN11 is recruited to PTK2 via EPHA2 (tyrosine phosphorylated). Microtubule-induced dephosphorylation at Tyr-397 is crucial for the induction of focal adhesion disassembly; this dephosphorylation could be catalyzed by PTPN11 and regulated by ZFYVE21. Phosphorylation on tyrosine residues is enhanced by NTN1. In terms of processing, sumoylated; this enhances autophosphorylation. Detected in B and T-lymphocytes. Isoform 1 and isoform 6 are detected in lung fibroblasts (at protein level). Ubiquitous. Expressed in epithelial cells (at protein level).

It is found in the cell junction. The protein resides in the focal adhesion. It localises to the cell membrane. The protein localises to the cytoplasm. Its subcellular location is the perinuclear region. It is found in the cell cortex. The protein resides in the cytoskeleton. It localises to the microtubule organizing center. The protein localises to the centrosome. Its subcellular location is the nucleus. It is found in the cilium basal body. The enzyme catalyses L-tyrosyl-[protein] + ATP = O-phospho-L-tyrosyl-[protein] + ADP + H(+). Its activity is regulated as follows. Subject to autoinhibition, mediated by interactions between the FERM domain and the kinase domain. Activated by autophosphorylation at Tyr-397. This promotes interaction with SRC and phosphorylation at Tyr-576 and Tyr-577 in the kinase activation loop. Phosphorylation at Tyr-576 and Tyr-577 is required for maximal kinase activity. Inhibited by TAC544, TAE226, PF-573,228 and PF-562,271. Functionally, non-receptor protein-tyrosine kinase that plays an essential role in regulating cell migration, adhesion, spreading, reorganization of the actin cytoskeleton, formation and disassembly of focal adhesions and cell protrusions, cell cycle progression, cell proliferation and apoptosis. Required for early embryonic development and placenta development. Required for embryonic angiogenesis, normal cardiomyocyte migration and proliferation, and normal heart development. Regulates axon growth and neuronal cell migration, axon branching and synapse formation; required for normal development of the nervous system. Plays a role in osteogenesis and differentiation of osteoblasts. Functions in integrin signal transduction, but also in signaling downstream of numerous growth factor receptors, G-protein coupled receptors (GPCR), EPHA2, netrin receptors and LDL receptors. Forms multisubunit signaling complexes with SRC and SRC family members upon activation; this leads to the phosphorylation of additional tyrosine residues, creating binding sites for scaffold proteins, effectors and substrates. Regulates numerous signaling pathways. Promotes activation of phosphatidylinositol 3-kinase and the AKT1 signaling cascade. Promotes activation of MAPK1/ERK2, MAPK3/ERK1 and the MAP kinase signaling cascade. Promotes localized and transient activation of guanine nucleotide exchange factors (GEFs) and GTPase-activating proteins (GAPs), and thereby modulates the activity of Rho family GTPases. Signaling via CAS family members mediates activation of RAC1. Phosphorylates NEDD9 following integrin stimulation. Recruits the ubiquitin ligase MDM2 to P53/TP53 in the nucleus, and thereby regulates P53/TP53 activity, P53/TP53 ubiquitination and proteasomal degradation. Phosphorylates SRC; this increases SRC kinase activity. Phosphorylates ACTN1, ARHGEF7, GRB7, RET and WASL. Promotes phosphorylation of PXN and STAT1; most likely PXN and STAT1 are phosphorylated by a SRC family kinase that is recruited to autophosphorylated PTK2/FAK1, rather than by PTK2/FAK1 itself. Promotes phosphorylation of BCAR1; GIT2 and SHC1; this requires both SRC and PTK2/FAK1. Promotes phosphorylation of BMX and PIK3R1. Isoform 6 (FRNK) does not contain a kinase domain and inhibits PTK2/FAK1 phosphorylation and signaling. Its enhanced expression can attenuate the nuclear accumulation of LPXN and limit its ability to enhance serum response factor (SRF)-dependent gene transcription. Its function is as follows. Isoform 6 (FRNK) does not contain a kinase domain and inhibits PTK2/FAK1 phosphorylation and signaling. Its enhanced expression can attenuate the nuclear accumulation of LPXN and limit its ability to enhance serum response factor (SRF)-dependent gene transcription. The chain is Focal adhesion kinase 1 from Homo sapiens (Human).